The sequence spans 183 residues: MKGGRRGQVPVKQNQHRLNGEIRGVREVRLTGADGESVGIVSIQEALATAEESGLDLVEISPNAEPPVCRVMDYGKFLFEKSKATKEQKKKQKQIQIKELKFRPGTDVGDYQVKLRNLIRFLEEGNKVKVTIRFRGREMAHQDIGVDVLNRLKEDTDEFAVVESFPTKIEARQMIMVLAPKKK.

Belongs to the IF-3 family. As to quaternary structure, monomer.

It is found in the cytoplasm. IF-3 binds to the 30S ribosomal subunit and shifts the equilibrium between 70S ribosomes and their 50S and 30S subunits in favor of the free subunits, thus enhancing the availability of 30S subunits on which protein synthesis initiation begins. The sequence is that of Translation initiation factor IF-3 from Vibrio cholerae serotype O1 (strain ATCC 39315 / El Tor Inaba N16961).